Reading from the N-terminus, the 487-residue chain is UDP-N-acetylmuramate--L-alanine ligase (487 aa).

ATP is bound at residue 130–136 (GTHGKTT).

The protein belongs to the MurCDEF family.

Its subcellular location is the cytoplasm. The catalysed reaction is UDP-N-acetyl-alpha-D-muramate + L-alanine + ATP = UDP-N-acetyl-alpha-D-muramoyl-L-alanine + ADP + phosphate + H(+). It functions in the pathway cell wall biogenesis; peptidoglycan biosynthesis. Its function is as follows. Cell wall formation. This is UDP-N-acetylmuramate--L-alanine ligase from Photobacterium profundum (strain SS9).